Consider the following 268-residue polypeptide: Interleukin-1 alpha (268 aa).

Residues Met1–Arg112 constitute a propeptide that is removed on maturation. An N6-acetyllysine modification is found at Lys82. The nuclear localization signal (NLS) stretch occupies residues Lys82–Leu86. Ser87 is subject to Phosphoserine. N-linked (GlcNAc...) asparagine glycosylation is found at Asn102 and Asn141.

It belongs to the IL-1 family. As to quaternary structure, monomer. Interacts with TMED10; the interaction mediates the translocation from the cytoplasm into the ERGIC (endoplasmic reticulum-Golgi intermediate compartment) and thereby secretion. Interacts with IL1R1. Interacts with S100A13; this interaction is the first step in the export of IL1A, followed by direct translocation of this complex across the plasma membrane. Post-translationally, acetylated within its nuclear localization sequence, which impacts subcellular localization. Proteolytic processed by CAPN1 in a calcium-dependent manner. Cleavage from 31 kDa precursor to 18 kDa biologically active molecules. In terms of processing, phosphorylated. Phosphorylation greatly enhances susceptibility to digestion and promotes the conversion of pre-IL1A alpha to the biologically active IL1A.

It localises to the nucleus. The protein localises to the cytoplasm. It is found in the secreted. Its function is as follows. Cytokine constitutively present intracellularly in nearly all resting non-hematopoietic cells that plays an important role in inflammation and bridges the innate and adaptive immune systems. After binding to its receptor IL1R1 together with its accessory protein IL1RAP, forms the high affinity interleukin-1 receptor complex. Signaling involves the recruitment of adapter molecules such as MYD88, IRAK1 or IRAK4. In turn, mediates the activation of NF-kappa-B and the three MAPK pathways p38, p42/p44 and JNK pathways. Within the cell, acts as an alarmin and cell death results in its liberation in the extracellular space after disruption of the cell membrane to induce inflammation and alert the host to injury or damage. In addition to its role as a danger signal, which occurs when the cytokine is passively released by cell necrosis, directly senses DNA damage and acts as signal for genotoxic stress without loss of cell integrity. The sequence is that of Interleukin-1 alpha (IL1A) from Bos taurus (Bovine).